We begin with the raw amino-acid sequence, 393 residues long: NAD(P)H-quinone oxidoreductase subunit H, chloroplastic (393 aa).

The protein belongs to the complex I 49 kDa subunit family. As to quaternary structure, NDH is composed of at least 16 different subunits, 5 of which are encoded in the nucleus.

The protein resides in the plastid. It is found in the chloroplast thylakoid membrane. The enzyme catalyses a plastoquinone + NADH + (n+1) H(+)(in) = a plastoquinol + NAD(+) + n H(+)(out). It carries out the reaction a plastoquinone + NADPH + (n+1) H(+)(in) = a plastoquinol + NADP(+) + n H(+)(out). In terms of biological role, NDH shuttles electrons from NAD(P)H:plastoquinone, via FMN and iron-sulfur (Fe-S) centers, to quinones in the photosynthetic chain and possibly in a chloroplast respiratory chain. The immediate electron acceptor for the enzyme in this species is believed to be plastoquinone. Couples the redox reaction to proton translocation, and thus conserves the redox energy in a proton gradient. In Zygnema circumcarinatum (Green alga), this protein is NAD(P)H-quinone oxidoreductase subunit H, chloroplastic.